A 321-amino-acid chain; its full sequence is Glucan 1,3-beta-glucosidase (321 aa).

Residues 1 to 21 form the signal peptide; the sequence is MQFLSSFVFAALALLPLSAMA. Asparagine 39 and asparagine 99 each carry an N-linked (GlcNAc...) asparagine glycan. Glutamate 141 serves as the catalytic Proton donor. N-linked (GlcNAc...) asparagine glycans are attached at residues asparagine 210, asparagine 213, and asparagine 237. Catalysis depends on glutamate 244, which acts as the Nucleophile. N-linked (GlcNAc...) asparagine glycans are attached at residues asparagine 309 and asparagine 317.

The protein belongs to the glycosyl hydrolase 17 family.

The protein localises to the secreted. Its subcellular location is the cell wall. It catalyses the reaction Successive hydrolysis of beta-D-glucose units from the non-reducing ends of (1-&gt;3)-beta-D-glucans, releasing alpha-glucose.. Its function is as follows. Glucanases possibly play a role in cell expansion during growth, in cell-cell fusion during mating, and in spore release during sporulation. This enzyme may be involved in beta-glucan degradation and also function biosynthetically as a transglycosylase. The polypeptide is Glucan 1,3-beta-glucosidase (bgl2) (Schizosaccharomyces pombe (strain 972 / ATCC 24843) (Fission yeast)).